Consider the following 521-residue polypeptide: Tetratricopeptide repeat and J domain-containing co-chaperone DNJ1 (521 aa).

An N-terminal signal peptide occupies residues 1–21 (MHLNLAGLAVAATAFLATASA). TPR repeat units follow at residues 33-66 (VSNLLTKAQTHLSRGETNEALVYYDAAIARDPTN), 67-100 (YLSLFKRATAYLSLGRTSQATEDFNKVLSLKPGF), 102-134 (GAHLQLARLRAKAGDWDAAKAQYGLAGKAPKSA), 176-209 (PHLRELRAHCRFELGDVELALSDLQHVLHMKPGD), 211-244 (SPHIVISATSFYALGDLENGIGQVKKCLQSDPDS), 315-348 (LENLIEMTCQAYTESSHKEAAKYCDESLQLNPDS), and 349-382 (FWGLLHKGKAQLKSELYDAAIATLEKAAEIRPDQ). Positions 404–473 (DYYKVLGVEN…ELRARFDRGD (70 aa)) constitute a J domain. Over residues 464-474 (ELRARFDRGDD) the composition is skewed to basic and acidic residues. Residues 464 to 521 (ELRARFDRGDDPNSQERPNPFQGQGNPFGGGHPFMFQQGGGGGGPNIKFQFGGQPFGF) are disordered. A compositionally biased stretch (gly residues) spans 489–508 (NPFGGGHPFMFQQGGGGGGP). The span at 509-521 (NIKFQFGGQPFGF) shows a compositional bias: low complexity.

Its subcellular location is the endoplasmic reticulum lumen. In terms of biological role, endoplasmic reticulum co-chaperone required for the of virulence factors such as PG1, the major endopolygalacturonase produced during the infection of tomato plants. In Fusarium oxysporum f. sp. lycopersici (strain 4287 / CBS 123668 / FGSC 9935 / NRRL 34936) (Fusarium vascular wilt of tomato), this protein is Tetratricopeptide repeat and J domain-containing co-chaperone DNJ1.